Here is a 77-residue protein sequence, read N- to C-terminus: uncharacterized protein (77 aa).

The HTH cro/C1-type domain maps to 11 to 65; sequence FARLRREKGLTQEEVEARSGFSQQYLSSLERGRRNPTVITLYELAQALGVSHVEL. The H-T-H motif DNA-binding region spans 22–41; sequence QEEVEARSGFSQQYLSSLER.

This is an uncharacterized protein from Sinorhizobium fredii (strain NBRC 101917 / NGR234).